We begin with the raw amino-acid sequence, 241 residues long: Uridylate kinase (241 aa).

Residue 12–15 coordinates ATP; sequence KISG. Residues 20–25 form an involved in allosteric activation by GTP region; the sequence is GDKGNG. UMP is bound at residue Gly-54. ATP-binding residues include Gly-55 and Arg-59. UMP is bound by residues Asp-74 and 135–142; that span reads TGNPYFST. ATP contacts are provided by Asn-163, Tyr-169, and Asp-172.

Belongs to the UMP kinase family. Homohexamer.

Its subcellular location is the cytoplasm. The enzyme catalyses UMP + ATP = UDP + ADP. Its pathway is pyrimidine metabolism; CTP biosynthesis via de novo pathway; UDP from UMP (UMPK route): step 1/1. Allosterically activated by GTP. Inhibited by UTP. In terms of biological role, catalyzes the reversible phosphorylation of UMP to UDP. The sequence is that of Uridylate kinase from Lactobacillus helveticus (strain DPC 4571).